Consider the following 127-residue polypeptide: UPF0716 protein YtzA (127 aa).

4 consecutive transmembrane segments (helical) span residues 3–22 (FLFL…FLFL), 26–46 (IGIL…AAAA), 70–90 (AIAD…PGFL), and 93–115 (LAGA…FKWL).

It belongs to the UPF0716 (FxsA) family.

It localises to the cell membrane. This Bacillus subtilis (strain 168) protein is UPF0716 protein YtzA (ytzA).